The chain runs to 294 residues: UDP-3-O-acyl-N-acetylglucosamine deacetylase (294 aa).

Zn(2+)-binding residues include His75, His232, and Asp236. His259 functions as the Proton donor in the catalytic mechanism.

It belongs to the LpxC family. It depends on Zn(2+) as a cofactor.

It catalyses the reaction a UDP-3-O-[(3R)-3-hydroxyacyl]-N-acetyl-alpha-D-glucosamine + H2O = a UDP-3-O-[(3R)-3-hydroxyacyl]-alpha-D-glucosamine + acetate. Its pathway is glycolipid biosynthesis; lipid IV(A) biosynthesis; lipid IV(A) from (3R)-3-hydroxytetradecanoyl-[acyl-carrier-protein] and UDP-N-acetyl-alpha-D-glucosamine: step 2/6. Its function is as follows. Catalyzes the hydrolysis of UDP-3-O-myristoyl-N-acetylglucosamine to form UDP-3-O-myristoylglucosamine and acetate, the committed step in lipid A biosynthesis. The sequence is that of UDP-3-O-acyl-N-acetylglucosamine deacetylase from Campylobacter jejuni subsp. jejuni serotype O:2 (strain ATCC 700819 / NCTC 11168).